Here is a 248-residue protein sequence, read N- to C-terminus: MNVLPCSINTLKGLYEISGVEVGQHFYWQIGGFQVHAQVLITSWVVIAILLGSAAIAVRNPQTIPTDGQNFFEYVLEFIRDVSKTQIGEEEYGPWVPFIGTLFLFIFVSNWSGALLPWRIIQLPHGELAAPTNDINTTVALALLTSVAYFYAGLTKKGLGYFGKYIQPTPILLPINVLEDFTKPLSLSFRLFGNILADELVVVVLVSLVPLVIPIPVMFLGLFTSGIQALIFATLAAAYIGESMEGHH.

Transmembrane regions (helical) follow at residues 38 to 58, 96 to 116, 135 to 155, 200 to 220, and 221 to 241; these read QVLITSWVVIAILLGSAAIAV, VPFIGTLFLFIFVSNWSGALL, INTTVALALLTSVAYFYAGLT, LVVVVLVSLVPLVIPIPVMFL, and GLFTSGIQALIFATLAAAYIG.

It belongs to the ATPase A chain family. In terms of assembly, F-type ATPases have 2 components, CF(1) - the catalytic core - and CF(0) - the membrane proton channel. CF(1) has five subunits: alpha(3), beta(3), gamma(1), delta(1), epsilon(1). CF(0) has four main subunits: a, b, b' and c.

It localises to the plastid. It is found in the chloroplast thylakoid membrane. Its function is as follows. Key component of the proton channel; it plays a direct role in the translocation of protons across the membrane. The polypeptide is ATP synthase subunit a, chloroplastic (Nuphar advena (Common spatterdock)).